The primary structure comprises 141 residues: Nucleoside triphosphatase NudI (141 aa).

The Nudix hydrolase domain occupies 1–141 (MRQRTIVCPL…RHTLRLKGLL (141 aa)). The Nudix box signature appears at 38–59 (GGVEPGERIEEALRREIREELG).

It belongs to the Nudix hydrolase family. NudI subfamily. Monomer. It depends on Mg(2+) as a cofactor.

The enzyme catalyses a ribonucleoside 5'-triphosphate + H2O = a ribonucleoside 5'-phosphate + diphosphate + H(+). It catalyses the reaction a 2'-deoxyribonucleoside 5'-triphosphate + H2O = a 2'-deoxyribonucleoside 5'-phosphate + diphosphate + H(+). It carries out the reaction dUTP + H2O = dUMP + diphosphate + H(+). The catalysed reaction is dTTP + H2O = dTMP + diphosphate + H(+). The enzyme catalyses dCTP + H2O = dCMP + diphosphate + H(+). In terms of biological role, catalyzes the hydrolysis of nucleoside triphosphates, with a preference for pyrimidine deoxynucleoside triphosphates (dUTP, dTTP and dCTP). The sequence is that of Nucleoside triphosphatase NudI from Salmonella arizonae (strain ATCC BAA-731 / CDC346-86 / RSK2980).